Consider the following 349-residue polypeptide: N-acetyl-gamma-glutamyl-phosphate reductase (349 aa).

Cysteine 149 is a catalytic residue.

The protein belongs to the NAGSA dehydrogenase family. Type 1 subfamily.

It localises to the cytoplasm. It carries out the reaction N-acetyl-L-glutamate 5-semialdehyde + phosphate + NADP(+) = N-acetyl-L-glutamyl 5-phosphate + NADPH + H(+). The protein operates within amino-acid biosynthesis; L-arginine biosynthesis; N(2)-acetyl-L-ornithine from L-glutamate: step 3/4. In terms of biological role, catalyzes the NADPH-dependent reduction of N-acetyl-5-glutamyl phosphate to yield N-acetyl-L-glutamate 5-semialdehyde. The polypeptide is N-acetyl-gamma-glutamyl-phosphate reductase (Acinetobacter baumannii (strain SDF)).